The chain runs to 190 residues: Small ribosomal subunit protein uS4 (190 aa).

The S4 RNA-binding domain maps to 105–181 (RRLQTLVYKL…RKKAKAAEGG (77 aa)). Positions 163–190 (GGGRPGRVRRKKAKAAEGGDGDAEEDEE) are disordered. Over residues 181–190 (GDGDAEEDEE) the composition is skewed to acidic residues.

The protein belongs to the universal ribosomal protein uS4 family.

This Podospora anserina (Pleurage anserina) protein is Small ribosomal subunit protein uS4 (RPS9).